The sequence spans 404 residues: Serine/threonine-protein phosphatase 2A regulatory subunit rsa-1 (404 aa).

Part of a complex consisting of a common heterodimeric core enzyme, composed of catalytic subunit let-92 and constant regulatory subunit paa-1, that associates with a variety of regulatory subunits which confer distinct properties to the holoenzyme. Interacts with rsa-2, spd-5 and tpxl-1.

The protein localises to the cytoplasm. It localises to the cytoskeleton. It is found in the microtubule organizing center. Its subcellular location is the centrosome. In terms of biological role, regulatory subunit of phosphatase let-92 which recruits let-92/paa-1 complex to the centrosomes, thereby regulating microtubule outgrowth from centrosomes and mitotic spindle assembly ensuring the stability of kinetochore microtubules. This Caenorhabditis elegans protein is Serine/threonine-protein phosphatase 2A regulatory subunit rsa-1.